Reading from the N-terminus, the 257-residue chain is Type III pantothenate kinase (257 aa).

6–13 serves as a coordination point for ATP; that stretch reads EQGNTNTL. A substrate-binding site is contributed by 107-110; the sequence is GADR. D109 acts as the Proton acceptor in catalysis. D129 provides a ligand contact to K(+). T132 lines the ATP pocket. T184 contributes to the substrate binding site.

The protein belongs to the type III pantothenate kinase family. Homodimer. The cofactor is NH4(+). It depends on K(+) as a cofactor.

It is found in the cytoplasm. It carries out the reaction (R)-pantothenate + ATP = (R)-4'-phosphopantothenate + ADP + H(+). It participates in cofactor biosynthesis; coenzyme A biosynthesis; CoA from (R)-pantothenate: step 1/5. In terms of biological role, catalyzes the phosphorylation of pantothenate (Pan), the first step in CoA biosynthesis. In Phenylobacterium zucineum (strain HLK1), this protein is Type III pantothenate kinase.